A 261-amino-acid chain; its full sequence is Lysoplasmalogenase (261 aa).

8 consecutive transmembrane segments (helical) span residues 29–49 (GWVV…VIAL), 65–85 (PAFK…HPIG), 90–107 (WLVP…LLAI), 111–133 (TWAF…GALL), 146–166 (VAAV…FWPH), 172–192 (LTIP…TALL), 197–217 (TIWT…IGIG), and 227–247 (AVPI…GFFF).

This sequence belongs to the TMEM86 family.

Its subcellular location is the cell membrane. The enzyme catalyses a 1-O-(1Z-alkenyl)-sn-glycero-3-phosphocholine + H2O = a 2,3-saturated aldehyde + sn-glycerol 3-phosphocholine. The catalysed reaction is a 1-O-(1Z-alkenyl)-sn-glycero-3-phosphoethanolamine + H2O = a 2,3-saturated aldehyde + sn-glycero-3-phosphoethanolamine. Specifically hydrolyzes the vinyl ether bond of lysoplasmenylcholine (pLPC) and lysoplasmenylethanolamine (pLPE) to release a fatty aldehyde and glycerophospho-choline or glycerophospho-ethanolamine. The chain is Lysoplasmalogenase from Mycobacterium bovis (strain ATCC BAA-935 / AF2122/97).